Here is a 168-residue protein sequence, read N- to C-terminus: Thiol peroxidase (168 aa).

A Thioredoxin domain is found at 19–168; sequence PQAGSKAQAF…YDAALNVLKA (150 aa). The active-site Cysteine sulfenic acid (-SOH) intermediate is Cys61. Cysteines 61 and 95 form a disulfide.

The protein belongs to the peroxiredoxin family. Tpx subfamily. In terms of assembly, homodimer.

The enzyme catalyses a hydroperoxide + [thioredoxin]-dithiol = an alcohol + [thioredoxin]-disulfide + H2O. Functionally, thiol-specific peroxidase that catalyzes the reduction of hydrogen peroxide and organic hydroperoxides to water and alcohols, respectively. Plays a role in cell protection against oxidative stress by detoxifying peroxides. The polypeptide is Thiol peroxidase (Salmonella typhi).